The chain runs to 263 residues: Endonuclease 8 (263 aa).

The Schiff-base intermediate with DNA role is filled by Pro2. The active-site Proton donor is Glu3. Catalysis depends on Lys53, which acts as the Proton donor; for beta-elimination activity. Positions 70, 125, and 169 each coordinate DNA. Residues 229 to 263 (KVFHRDGESCERCGGIIERTMLSSRPFYWCPHCQR) form an FPG-type zinc finger. Arg253 acts as the Proton donor; for delta-elimination activity in catalysis.

This sequence belongs to the FPG family. Requires Zn(2+) as cofactor.

The catalysed reaction is 2'-deoxyribonucleotide-(2'-deoxyribose 5'-phosphate)-2'-deoxyribonucleotide-DNA = a 3'-end 2'-deoxyribonucleotide-(2,3-dehydro-2,3-deoxyribose 5'-phosphate)-DNA + a 5'-end 5'-phospho-2'-deoxyribonucleoside-DNA + H(+). Functionally, involved in base excision repair of DNA damaged by oxidation or by mutagenic agents. Acts as a DNA glycosylase that recognizes and removes damaged bases. Has a preference for oxidized pyrimidines, such as thymine glycol, 5,6-dihydrouracil and 5,6-dihydrothymine. Has AP (apurinic/apyrimidinic) lyase activity and introduces nicks in the DNA strand. Cleaves the DNA backbone by beta-delta elimination to generate a single-strand break at the site of the removed base with both 3'- and 5'-phosphates. This Pectobacterium carotovorum subsp. carotovorum (strain PC1) protein is Endonuclease 8.